The sequence spans 165 residues: Choriogonadotropin subunit beta 7 (165 aa).

A signal peptide spans 1–20 (MEMFQGLLLLLLLSMGGTWA). 6 disulfides stabilise this stretch: Cys-29–Cys-77, Cys-43–Cys-92, Cys-46–Cys-130, Cys-54–Cys-108, Cys-58–Cys-110, and Cys-113–Cys-120. Residues Asn-33 and Asn-50 are each glycosylated (N-linked (GlcNAc...) asparagine). Residues 131–165 (DDPRFQASSSSKAPPPSLPSPSRLPGPSDTPILPQ) are disordered. Ser-141, Ser-147, Ser-152, and Ser-158 each carry an O-linked (GalNAc...) serine glycan. Pro residues predominate over residues 143 to 154 (APPPSLPSPSRL).

This sequence belongs to the glycoprotein hormones subunit beta family. Heterodimer of a common alpha chain identical in LH, FSH, TSH and HCG and a unique beta chain distinct in each of the hormones and confers receptor and biological specificity. As to expression, high expression in the placenta throughout pregnancy.

It localises to the secreted. Its function is as follows. Beta subunit of the human chorionic gonadotropin (hCG). hCG is a complex glycoprotein composed of two glycosylated subunits alpha and beta which are non-covalently associated. The alpha subunit is identical to those in the pituitary gonadotropin hormones (LH, FSH and TSH). The beta subunits are distinct in each of the hormones and confer receptor and biological specificity. Has an essential role for pregnancy and maternal adaptation. Stimulates the ovaries to synthesize the steroids that are essential for the maintenance of pregnancy. The protein is Choriogonadotropin subunit beta 7 of Homo sapiens (Human).